Consider the following 736-residue polypeptide: Prospero homeobox protein 1 (736 aa).

The segment covering 103-135 (KNGGTEPSFQASGLSSTGSEVHQEDVCSNSSRD) has biased composition (polar residues). Residues 103–146 (KNGGTEPSFQASGLSSTGSEVHQEDVCSNSSRDSPQECLSPFGR) form a disordered region. The Nuclear localization signal signature appears at 163-168 (RAKRAR). 5 disordered regions span residues 180–220 (PRVA…QQQS), 261–301 (YDST…EMCE), 319–344 (EIGENKPKREGPKEKDQGPNSFHPEG), 445–465 (NSSDQPASAPPAGGHHASLHQ), and 499–518 (PSASFPGKERASPESLDLTR). Residues 264–274 (TDSENDEDGNL) show a composition bias toward acidic residues. Residues 319–335 (EIGENKPKREGPKEKDQ) are compositionally biased toward basic and acidic residues. A compositionally biased stretch (low complexity) spans 450–460 (PASAPPAGGHH). The segment covering 505 to 518 (GKERASPESLDLTR) has biased composition (basic and acidic residues). The region spanning 576 to 634 (QEGLSPNHLKKAKLMFFYTRYPSSNMLKTYFSDVKFNRCITSQLIKWFSNFREFYYIQM) is the Prospero-type homeo domain. A homeo-Prospero region spans residues 576 to 734 (QEGLSPNHLK…KSPNCLQELL (159 aa)). The Prospero domain occupies 635 to 734 (EKYARQAIND…KSPNCLQELL (100 aa)).

Belongs to the Prospero homeodomain family. As to expression, expressed most actively in the developing lens and midgut and at lower levels in the developing brain, heart, muscle and retina.

The protein localises to the nucleus. Its function is as follows. Transcription factor which may be involved in developmental processes such as cell fate determination, gene transcriptional regulation and progenitor cell regulation in a number of organs. May be essential in the development and function of the eye. May play a role in the regulation of the circadian rhythm by repressing the expression of clock genes. In Gallus gallus (Chicken), this protein is Prospero homeobox protein 1 (PROX1).